Here is a 1020-residue protein sequence, read N- to C-terminus: Glucan endo-1,3-beta-D-glucosidase (1020 aa).

The first 25 residues, Met1–Ala25, serve as a signal peptide directing secretion. The interval His28 to Pro251 is beta-sandwich subdomain. Positions His28–Gly722 constitute a GH81 domain. Residues Glu252–Thr350 are alpha/beta subdomain. The segment at Asp360–Gly722 is (alpha/beta)6 barrel subdomain. (1,3-beta-D-glucosyl)n is bound by residues Tyr387, Lys391, His458, Asp466, His470, Asp530, Asn540, Glu542, Glu546, Glu699, and Arg704. Residue Asp466 is part of the active site. Residues Glu542 and Glu546 contribute to the active site. The segment at His771–Asp790 is disordered. The CBM6 domain maps to Glu796–Arg922. (1,3-beta-D-glucosyl)n is bound by residues Glu812, Trp825, Asp853, Asn878, Asp912, and Asn915. In terms of domain architecture, CBM56 spans Asn928–Arg1020.

This sequence belongs to the glycosyl hydrolase 81 family.

The protein localises to the secreted. The enzyme catalyses Hydrolysis of (1-&gt;3)-beta-D-glucosidic linkages in (1-&gt;3)-beta-D-glucans.. Its function is as follows. Cleaves internal linkages in 1,3-beta-glucan. May contribute to plant biomass degradation. The protein is Glucan endo-1,3-beta-D-glucosidase of Halalkalibacterium halodurans (strain ATCC BAA-125 / DSM 18197 / FERM 7344 / JCM 9153 / C-125) (Bacillus halodurans).